Reading from the N-terminus, the 432-residue chain is Trigger factor (432 aa).

The region spanning 161 to 246 (EDRVTIDFTG…LKKVEERELP (86 aa)) is the PPIase FKBP-type domain.

This sequence belongs to the FKBP-type PPIase family. Tig subfamily. As to quaternary structure, homodimer and monomer. In vivo most of the ribosomes are in complex with monomeric TF. Uncomplexed TF, however, is in a monomer-dimer equilibrium with approximately two thirds of TF existing in a dimeric state.

It localises to the cytoplasm. It catalyses the reaction [protein]-peptidylproline (omega=180) = [protein]-peptidylproline (omega=0). Involved in protein export. Acts as a chaperone by maintaining the newly synthesized protein in an open conformation. Functions as a peptidyl-prolyl cis-trans isomerase. In Shigella dysenteriae serotype 1 (strain Sd197), this protein is Trigger factor.